The primary structure comprises 337 residues: m7GpppX diphosphatase (337 aa).

Positions 1-37 are disordered; the sequence is MAELAHQQSKRKRELDAEEAEASSTEGEEAGVGNGTS. Residue A2 is modified to N-acetylalanine. Positions 10-13 match the nuclear localization signal (NLS) motif; the sequence is KRKR. Residues 16–29 show a composition bias toward acidic residues; the sequence is DAEEAEASSTEGEE. Residues S24 and S101 each carry the phosphoserine modification. 2 positions are modified to N6-acetyllysine: K138 and K142. A nuclear export sequence (NES) motif is present at residues 142–154; the sequence is KYLRQDLHLVRET. Substrate contacts are provided by residues W175, E185, D205, K207, and 268–279; that span reads HYLPSYYHLHVH. The Histidine triad motif signature appears at 275 to 279; that stretch reads HLHVH. Residue H277 is the Nucleophile of the active site.

Belongs to the HIT family. As to quaternary structure, homodimer. Associates with components of the exosome multienzyme ribonuclease complex, such as EXOSC3 and EXOSC4. Interacts with NDOR1.

Its subcellular location is the cytoplasm. It localises to the nucleus. The catalysed reaction is a 5'-end (N(7)-methyl 5'-triphosphoguanosine)-ribonucleoside in mRNA + H2O = N(7)-methyl-GMP + a 5'-end diphospho-ribonucleoside in mRNA + 2 H(+). With respect to regulation, the hydrolytic product 7-methylguanosine diphosphate (m7GDP) efficiently inhibits the decapping scavenger activity and acts as a competitive inhibitor in vitro. Inhibited by 2,4-diaminoquinazoline. In terms of biological role, decapping scavenger enzyme that catalyzes the cleavage of a residual cap structure following the degradation of mRNAs by 3'-&gt;5' exosome-mediated mRNA decay pathway. Hydrolyzes cap analog structures like 7-methylguanosine nucleoside triphosphate (m7GpppG) with up to 10 nucleotide substrates (small capped oligoribonucleotides) and specifically releases 5'-phosphorylated RNA fragments and 7-methylguanosine monophosphate (m7GMP). Cleaves cap analog structures like tri-methyl guanosine nucleoside triphosphate (m3(2,2,7)GpppG) with very poor efficiency. Does not hydrolyze unmethylated cap analog (GpppG) and shows no decapping activity on intact m7GpppG-capped mRNA molecules longer than 25 nucleotides. Does not hydrolyze 7-methylguanosine diphosphate (m7GDP) to m7GMP. May also play a role in the 5'-&gt;3 mRNA decay pathway; m7GDP, the downstream product released by the 5'-&gt;3' mRNA mediated decapping activity, may be also converted by DCPS to m7GMP. Binds to m7GpppG and strongly to m7GDP. Plays a role in first intron splicing of pre-mRNAs. Inhibits activation-induced cell death. The protein is m7GpppX diphosphatase (DCPS) of Bos taurus (Bovine).